We begin with the raw amino-acid sequence, 848 residues long: Paramyosin (848 aa).

A nonhelical region region spans residues 1–9 (AFGSMSVAD). Residues 10–833 (LGSLTRLEDK…HLIRAKHRSS (824 aa)) are a coiled coil. The tract at residues 834 to 848 (VVTGKNASASKIYVL) is nonhelical region.

Belongs to the paramyosin family. Homodimer.

It localises to the cytoplasm. The protein resides in the myofibril. Paramyosin is a major structural component of many thick filaments isolated from invertebrate muscles. This is Paramyosin from Dirofilaria immitis (Canine heartworm).